A 360-amino-acid polypeptide reads, in one-letter code: Blue-light-activated histidine kinase 1 (360 aa).

The PAS domain maps to 38 to 109 (LFLETTQQTR…KLREGIAAER (72 aa)). Cysteine 85 is subject to S-4a-FMN cysteine. The PAC domain occupies 109–163 (RYTVVDLLNYRKDGIPFWNAVHVGPIYGEDGTLQYFYGSQWDITDIVAERRKAET). Position 173 is a phosphohistidine; by autocatalysis (histidine 173). Residues 260–303 (RSVTALGLALHELATNAVKYGALSVDAGRVEISWSREDGDVTLV) are HWE histidine kinase domain.

Post-translationally, FMN binds covalently to cysteine after exposure to blue light and this bond is spontaneously broken in the dark.

It carries out the reaction ATP + protein L-histidine = ADP + protein N-phospho-L-histidine.. Photosensitive kinase that is involved in increased bacterial virulence upon exposure to light. The protein is Blue-light-activated histidine kinase 1 of Erythrobacter litoralis (strain HTCC2594).